A 151-amino-acid chain; its full sequence is MDNIKLQKLTESISESDFGLSFKHTAYFNPRLRTTGGRYLLGSHDIEINPKQFEKFGETALIDIIKHELCHYHLHIQRKGYKHKDADFKKLSQKVGAPRFCAAIENYEERANYIYKCLGCGETFKRIRKVNTRKMVCGKCKGKLHLHKHIK.

The SprT-like domain maps to 7-147; that stretch reads QKLTESISES…GKCKGKLHLH (141 aa). Histidine 67 serves as a coordination point for Zn(2+). Residue glutamate 68 is part of the active site. Histidine 71 contributes to the Zn(2+) binding site.

It belongs to the SprT family. Zn(2+) is required as a cofactor.

It is found in the cytoplasm. The polypeptide is Protein SprT-like (Staphylococcus carnosus (strain TM300)).